Here is a 401-residue protein sequence, read N- to C-terminus: Imidazolonepropionase (401 aa).

Residues His66 and His68 each contribute to the Fe(3+) site. Residues His66 and His68 each coordinate Zn(2+). 4-imidazolone-5-propanoate is bound by residues Arg75, Tyr138, and His171. Tyr138 is an N-formimidoyl-L-glutamate binding site. Residue His236 coordinates Fe(3+). His236 is a binding site for Zn(2+). Residue Gln239 participates in 4-imidazolone-5-propanoate binding. Asp311 is a binding site for Fe(3+). Asp311 contacts Zn(2+). N-formimidoyl-L-glutamate is bound by residues Asn313 and Gly315. A 4-imidazolone-5-propanoate-binding site is contributed by Thr316.

This sequence belongs to the metallo-dependent hydrolases superfamily. HutI family. It depends on Zn(2+) as a cofactor. Fe(3+) is required as a cofactor.

The protein localises to the cytoplasm. The catalysed reaction is 4-imidazolone-5-propanoate + H2O = N-formimidoyl-L-glutamate. It functions in the pathway amino-acid degradation; L-histidine degradation into L-glutamate; N-formimidoyl-L-glutamate from L-histidine: step 3/3. In terms of biological role, catalyzes the hydrolytic cleavage of the carbon-nitrogen bond in imidazolone-5-propanoate to yield N-formimidoyl-L-glutamate. It is the third step in the universal histidine degradation pathway. In Acinetobacter baumannii (strain ACICU), this protein is Imidazolonepropionase.